A 132-amino-acid chain; its full sequence is Small ribosomal subunit protein uS8 (132 aa).

It belongs to the universal ribosomal protein uS8 family. In terms of assembly, part of the 30S ribosomal subunit. Contacts proteins S5 and S12.

Its function is as follows. One of the primary rRNA binding proteins, it binds directly to 16S rRNA central domain where it helps coordinate assembly of the platform of the 30S subunit. This Xylella fastidiosa (strain M23) protein is Small ribosomal subunit protein uS8.